The following is an 804-amino-acid chain: Elongation factor G, mitochondrial (804 aa).

The transit peptide at 1-63 (MSMHRVARAV…RHFFQSPIIR (63 aa)) directs the protein to the mitochondrion. A tr-type G domain is found at 99–385 (RRVRNIGIAA…AVCDYLPNPA (287 aa)). Residues 108-115 (AHIDSGKT), 183-187 (DTPGH), and 237-240 (NKMD) contribute to the GTP site.

The protein belongs to the TRAFAC class translation factor GTPase superfamily. Classic translation factor GTPase family. EF-G/EF-2 subfamily.

It localises to the mitochondrion. It participates in protein biosynthesis; polypeptide chain elongation. Mitochondrial GTPase that catalyzes the GTP-dependent ribosomal translocation step during translation elongation. During this step, the ribosome changes from the pre-translocational (PRE) to the post-translocational (POST) state as the newly formed A-site-bound peptidyl-tRNA and P-site-bound deacylated tRNA move to the P and E sites, respectively. Catalyzes the coordinated movement of the two tRNA molecules, the mRNA and conformational changes in the ribosome. This chain is Elongation factor G, mitochondrial (mef1), found in Sclerotinia sclerotiorum (strain ATCC 18683 / 1980 / Ss-1) (White mold).